Consider the following 197-residue polypeptide: Shikimate kinase (197 aa).

ATP is bound at residue 15-20 (GSGKSS). S19 contributes to the Mg(2+) binding site. D37, R61, and G83 together coordinate substrate. R121 serves as a coordination point for ATP. R148 contacts substrate.

Belongs to the shikimate kinase family. As to quaternary structure, monomer. Mg(2+) is required as a cofactor.

Its subcellular location is the cytoplasm. The enzyme catalyses shikimate + ATP = 3-phosphoshikimate + ADP + H(+). The protein operates within metabolic intermediate biosynthesis; chorismate biosynthesis; chorismate from D-erythrose 4-phosphate and phosphoenolpyruvate: step 5/7. In terms of biological role, catalyzes the specific phosphorylation of the 3-hydroxyl group of shikimic acid using ATP as a cosubstrate. This is Shikimate kinase from Chlorobium phaeovibrioides (strain DSM 265 / 1930) (Prosthecochloris vibrioformis (strain DSM 265)).